A 405-amino-acid polypeptide reads, in one-letter code: Phosphopentomutase (405 aa).

Positions 10, 303, 308, 344, 345, and 356 each coordinate Mn(2+).

Belongs to the phosphopentomutase family. The cofactor is Mn(2+).

Its subcellular location is the cytoplasm. The enzyme catalyses 2-deoxy-alpha-D-ribose 1-phosphate = 2-deoxy-D-ribose 5-phosphate. The catalysed reaction is alpha-D-ribose 1-phosphate = D-ribose 5-phosphate. Its pathway is carbohydrate degradation; 2-deoxy-D-ribose 1-phosphate degradation; D-glyceraldehyde 3-phosphate and acetaldehyde from 2-deoxy-alpha-D-ribose 1-phosphate: step 1/2. Its function is as follows. Isomerase that catalyzes the conversion of deoxy-ribose 1-phosphate (dRib-1-P) and ribose 1-phosphate (Rib-1-P) to deoxy-ribose 5-phosphate (dRib-5-P) and ribose 5-phosphate (Rib-5-P), respectively. The sequence is that of Phosphopentomutase from Shewanella frigidimarina (strain NCIMB 400).